A 267-amino-acid chain; its full sequence is Triosephosphate isomerase (267 aa).

Residue N12–K14 participates in substrate binding. The active-site Electrophile is H104. Catalysis depends on E176, which acts as the Proton acceptor. Residues G182, S222, and G243–G244 each bind substrate.

This sequence belongs to the triosephosphate isomerase family. In terms of assembly, homodimer.

The protein resides in the cytoplasm. It catalyses the reaction D-glyceraldehyde 3-phosphate = dihydroxyacetone phosphate. The protein operates within carbohydrate biosynthesis; gluconeogenesis. It participates in carbohydrate degradation; glycolysis; D-glyceraldehyde 3-phosphate from glycerone phosphate: step 1/1. In terms of biological role, involved in the gluconeogenesis. Catalyzes stereospecifically the conversion of dihydroxyacetone phosphate (DHAP) to D-glyceraldehyde-3-phosphate (G3P). The polypeptide is Triosephosphate isomerase (Bifidobacterium longum (strain DJO10A)).